Here is a 340-residue protein sequence, read N- to C-terminus: UDP-glucose 4-epimerase (340 aa).

NAD(+)-binding positions include 16-17 (YI), 37-42 (IDNNKN), 60-61 (DL), 82-86 (FAAKT), Ser-127, Tyr-154, Lys-158, and Phe-182. Substrate contacts are provided by Ser-127 and Tyr-154. Tyr-154 serves as the catalytic Proton acceptor. Substrate contacts are provided by residues Asn-183, 199 to 200 (TL), 216 to 218 (FLY), Arg-231, and 295 to 298 (RSWD).

This sequence belongs to the NAD(P)-dependent epimerase/dehydratase family. In terms of assembly, homodimer. It depends on NAD(+) as a cofactor.

It catalyses the reaction UDP-alpha-D-glucose = UDP-alpha-D-galactose. It functions in the pathway carbohydrate metabolism; galactose metabolism. In terms of biological role, involved in the metabolism of galactose. Catalyzes the conversion of UDP-galactose (UDP-Gal) to UDP-glucose (UDP-Glc) through a mechanism involving the transient reduction of NAD. This is UDP-glucose 4-epimerase (galE) from Mycoplasma genitalium (strain ATCC 33530 / DSM 19775 / NCTC 10195 / G37) (Mycoplasmoides genitalium).